Reading from the N-terminus, the 259-residue chain is Deoxyribose-phosphate aldolase (259 aa).

The active-site Proton donor/acceptor is the Asp-102. Lys-167 (schiff-base intermediate with acetaldehyde) is an active-site residue. Lys-201 (proton donor/acceptor) is an active-site residue.

Belongs to the DeoC/FbaB aldolase family. DeoC type 2 subfamily.

The protein resides in the cytoplasm. The enzyme catalyses 2-deoxy-D-ribose 5-phosphate = D-glyceraldehyde 3-phosphate + acetaldehyde. It functions in the pathway carbohydrate degradation; 2-deoxy-D-ribose 1-phosphate degradation; D-glyceraldehyde 3-phosphate and acetaldehyde from 2-deoxy-alpha-D-ribose 1-phosphate: step 2/2. In terms of biological role, catalyzes a reversible aldol reaction between acetaldehyde and D-glyceraldehyde 3-phosphate to generate 2-deoxy-D-ribose 5-phosphate. The polypeptide is Deoxyribose-phosphate aldolase (Escherichia coli O45:K1 (strain S88 / ExPEC)).